A 1015-amino-acid polypeptide reads, in one-letter code: SKI family transcriptional corepressor 2 (1015 aa).

2 disordered regions span residues 280 to 316 (HLLG…DDDD) and 518 to 934 (GAAG…KKDV). Positions 284–295 (APPPPPPPPPPL) are enriched in pro residues. Positions 575–600 (PPADSVAAAGAGAAAAGSGPAGSRVP) are enriched in low complexity. Basic and acidic residues predominate over residues 628 to 637 (GGKDDAESLA). Residues 653–669 (HPHHHHHPHHHHHHHHP) are compositionally biased toward basic residues. 2 stretches are compositionally biased toward pro residues: residues 670–684 (PQPP…PQPD) and 694–708 (APPP…PPLA). Acidic residues-rich tracts occupy residues 730–745 (DSSE…QEVD) and 754–774 (GEEE…EETE). Positions 793 to 803 (PSEKGSSRDRA) are enriched in basic and acidic residues. Residues 832–842 (DLPPPPPPPLA) show a composition bias toward pro residues. Composition is skewed to basic and acidic residues over residues 861–877 (PSLE…KTKE), 885–899 (TKDD…KEHS), and 912–922 (FWRERSGEHTQ).

Belongs to the SKI family. Interacts with SMAD2 and SMAD3. In terms of tissue distribution, expressed in cerebellum, spinal cord and testis. Isoform 2 is present in cerebellum (at protein level).

The protein resides in the nucleus. It localises to the cytoplasm. In terms of biological role, exhibits transcriptional repressor activity. Acts as a TGF-beta antagonist in the nervous system. This chain is SKI family transcriptional corepressor 2, found in Homo sapiens (Human).